Consider the following 448-residue polypeptide: Glutamyl-tRNA reductase (448 aa).

Residues 49 to 52 (TCNR), S109, 114 to 116 (ETQ), and Q120 each bind substrate. The active-site Nucleophile is C50. Position 189 to 194 (189 to 194 (GAGEMS)) interacts with NADP(+).

It belongs to the glutamyl-tRNA reductase family. Homodimer.

The catalysed reaction is (S)-4-amino-5-oxopentanoate + tRNA(Glu) + NADP(+) = L-glutamyl-tRNA(Glu) + NADPH + H(+). It participates in porphyrin-containing compound metabolism; protoporphyrin-IX biosynthesis; 5-aminolevulinate from L-glutamyl-tRNA(Glu): step 1/2. In terms of biological role, catalyzes the NADPH-dependent reduction of glutamyl-tRNA(Glu) to glutamate 1-semialdehyde (GSA). The protein is Glutamyl-tRNA reductase of Staphylococcus aureus (strain Mu3 / ATCC 700698).